Consider the following 653-residue polypeptide: MRTPCSQHRRDRPSAIGSQLPDADTLDTRQPPLQEIPISSFADKTFTAPAQIRNFCIIAHIDHGKSTLADRMLQLTGVVDERSMRAQYLDRMDIERERGITIKAQNVRLPWRVDKTDYVLHLIDTPGHVDFTYEVSRALEACEGAVLLVDAAQGIEAQTLANLYLALDRDLHIIPVLNKIDLPAADPDRYAAEMAHIIGCEPAEVLRVSGKTGEGVSDLLDEVVRQVPPPQGDAEAPTRAMIFDSVYDIYRGVVTYVRVVDGKISPRERIMMMSTGATHELLEVGIVSPEPKPCEGLGVGEVGYLITGVKDVRQSKVGDTVTSLSRARGAAAEALTGYREPKPMVYSGLYPVDGSDYPNLRDALDKLQLNDAALTYEPETSVALGFGFRCGFLGLLHMEITRERLEREFGLDLISTSPNVVYRVHKDDGTEIRVTNPSDWPEGKIRTVYEPVVKTTIIAPSEFIGTIMELCQSRRGELGGMDYLSPERVELRYTMPLGEIIFDFFDALKSRTRGYASLDYEEAGEQEAALVKVDILLQGEAVDAFSAIVHKDTAYAYGNKMTTKLKELIPRQQFEVPVQAAIGSKIIARENIRAIRKDVLSKCYGGDITRKRKLLEKQKEGKKRMKTIGRVEVPQEAFVAALSTDAAGDKGKK.

The tract at residues 1–30 is disordered; sequence MRTPCSQHRRDRPSAIGSQLPDADTLDTRQ. In terms of domain architecture, tr-type G spans 50–231; the sequence is AQIRNFCIIA…EVVRQVPPPQ (182 aa). Residues 62 to 67 and 178 to 181 each bind GTP; these read DHGKST and NKID.

The protein belongs to the TRAFAC class translation factor GTPase superfamily. Classic translation factor GTPase family. LepA subfamily.

The protein localises to the cell membrane. The catalysed reaction is GTP + H2O = GDP + phosphate + H(+). Functionally, required for accurate and efficient protein synthesis under certain stress conditions. May act as a fidelity factor of the translation reaction, by catalyzing a one-codon backward translocation of tRNAs on improperly translocated ribosomes. Back-translocation proceeds from a post-translocation (POST) complex to a pre-translocation (PRE) complex, thus giving elongation factor G a second chance to translocate the tRNAs correctly. Binds to ribosomes in a GTP-dependent manner. In Mycobacterium bovis (strain ATCC BAA-935 / AF2122/97), this protein is Elongation factor 4.